A 443-amino-acid polypeptide reads, in one-letter code: Ribulose bisphosphate carboxylase large chain (443 aa).

An N6,N6,N6-trimethyllysine modification is found at K3. The substrate site is built by N112 and T162. Residue K164 is the Proton acceptor of the active site. Residue K166 coordinates substrate. K190, D192, and E193 together coordinate Mg(2+). K190 bears the N6-carboxylysine mark. The Proton acceptor role is filled by H283. Substrate-binding residues include R284, H316, and S368.

This sequence belongs to the RuBisCO large chain family. Type I subfamily. Heterohexadecamer of 8 large chains and 8 small chains; disulfide-linked. The disulfide link is formed within the large subunit homodimers. The cofactor is Mg(2+). The disulfide bond which can form in the large chain dimeric partners within the hexadecamer appears to be associated with oxidative stress and protein turnover.

The protein localises to the plastid. It localises to the chloroplast. It catalyses the reaction 2 (2R)-3-phosphoglycerate + 2 H(+) = D-ribulose 1,5-bisphosphate + CO2 + H2O. The catalysed reaction is D-ribulose 1,5-bisphosphate + O2 = 2-phosphoglycolate + (2R)-3-phosphoglycerate + 2 H(+). RuBisCO catalyzes two reactions: the carboxylation of D-ribulose 1,5-bisphosphate, the primary event in carbon dioxide fixation, as well as the oxidative fragmentation of the pentose substrate in the photorespiration process. Both reactions occur simultaneously and in competition at the same active site. The sequence is that of Ribulose bisphosphate carboxylase large chain from Iris germanica (Bearded iris).